Consider the following 211-residue polypeptide: Envelope protein UL45 homolog (211 aa).

Residues 1-46 (MMSPTPEDDRDLVVVRGRLRMMDNGAEHDRERRSYTAWPHLCCGCT) lie on the Intravirion side of the membrane. A helical; Signal-anchor for type II membrane protein transmembrane segment spans residues 47–67 (IGIILTMFVIATTLLLASLFA). Residues 68–211 (FSYMSLESGT…SSILSNAIMK (144 aa)) lie on the Virion surface side of the membrane. 2 N-linked (GlcNAc...) asparagine; by host glycosylation sites follow: Asn96 and Asn133.

It belongs to the herpesviridae HHV-1 UL45 family.

It localises to the virion membrane. This Gallid herpesvirus 2 (strain bc-1) (GaHV-2) protein is Envelope protein UL45 homolog (UL45H).